The primary structure comprises 340 residues: Putative transport protein AF_1800 (340 aa).

The next 7 helical transmembrane spans lie at 7-27 (LVLLLSILVVLALTFYFFTPL), 57-77 (SVIATAIVILPISVLMFYGLI), 140-160 (TLLILNFFISIVVCFYALADM), 193-213 (LWFGNFVVAILIGLVSLPFFL), 225-245 (GLMFLAALIPIFAEWMIILPV), 260-280 (FLLIGVVFLYVLPELILRPYF), and 290-310 (LVLMLAFIGGGLVGGISGFFI).

Belongs to the autoinducer-2 exporter (AI-2E) (TC 2.A.86) family.

The protein localises to the cell membrane. This chain is Putative transport protein AF_1800, found in Archaeoglobus fulgidus (strain ATCC 49558 / DSM 4304 / JCM 9628 / NBRC 100126 / VC-16).